Reading from the N-terminus, the 204-residue chain is Somatotropin (204 aa).

A signal peptide spans 1 to 17 (MNSVVLLLSVVCLGVSS). Residue glutamine 18 is modified to Pyrrolidone carboxylic acid. Histidine 36 is a Zn(2+) binding site. A disulfide bridge connects residues cysteine 69 and cysteine 177. Glutamate 186 contributes to the Zn(2+) binding site. Cysteine 194 and cysteine 202 form a disulfide bridge.

Belongs to the somatotropin/prolactin family.

The protein resides in the secreted. In terms of biological role, growth hormone plays an important role in growth control and involved in the regulation of several anabolic processes. The sequence is that of Somatotropin (gh) from Oreochromis niloticus (Nile tilapia).